Reading from the N-terminus, the 218-residue chain is Eukaryotic translation initiation factor 3 subunit K (218 aa).

Position 2 is an N-acetylalanine (Ala2). Thr28 is subject to Phosphothreonine. Residues 42–204 (YDLEANLAVL…SIKPKNIVEK (163 aa)) enclose the PCI domain. Ser217 is subject to Phosphoserine.

The protein belongs to the eIF-3 subunit K family. Component of the eukaryotic translation initiation factor 3 (eIF-3) complex, which is composed of 13 subunits: EIF3A, EIF3B, EIF3C, EIF3D, EIF3E, EIF3F, EIF3G, EIF3H, EIF3I, EIF3J, EIF3K, EIF3L and EIF3M. The eIF-3 complex appears to include 3 stable modules: module A is composed of EIF3A, EIF3B, EIF3G and EIF3I; module B is composed of EIF3F, EIF3H, and EIF3M; and module C is composed of EIF3C, EIF3D, EIF3E, EIF3K and EIF3L. EIF3C of module C binds EIF3B of module A and EIF3H of module B, thereby linking the three modules. EIF3J is a labile subunit that binds to the eIF-3 complex via EIF3B. The eIF-3 complex interacts with RPS6KB1 under conditions of nutrient depletion. Mitogenic stimulation leads to binding and activation of a complex composed of MTOR and RPTOR, leading to phosphorylation and release of RPS6KB1 and binding of EIF4B to eIF-3. Interacts with CCND3, but not with CCND1 and CCND2.

Its subcellular location is the nucleus. The protein resides in the cytoplasm. Component of the eukaryotic translation initiation factor 3 (eIF-3) complex, which is required for several steps in the initiation of protein synthesis. The eIF-3 complex associates with the 40S ribosome and facilitates the recruitment of eIF-1, eIF-1A, eIF-2:GTP:methionyl-tRNAi and eIF-5 to form the 43S pre-initiation complex (43S PIC). The eIF-3 complex stimulates mRNA recruitment to the 43S PIC and scanning of the mRNA for AUG recognition. The eIF-3 complex is also required for disassembly and recycling of post-termination ribosomal complexes and subsequently prevents premature joining of the 40S and 60S ribosomal subunits prior to initiation. The eIF-3 complex specifically targets and initiates translation of a subset of mRNAs involved in cell proliferation, including cell cycling, differentiation and apoptosis, and uses different modes of RNA stem-loop binding to exert either translational activation or repression. The protein is Eukaryotic translation initiation factor 3 subunit K of Bos taurus (Bovine).